Here is a 563-residue protein sequence, read N- to C-terminus: Arginine--tRNA ligase (563 aa).

Residues 121–131 carry the 'HIGH' region motif; it reads PNIAKPMSMGH.

This sequence belongs to the class-I aminoacyl-tRNA synthetase family. As to quaternary structure, monomer.

The protein resides in the cytoplasm. The enzyme catalyses tRNA(Arg) + L-arginine + ATP = L-arginyl-tRNA(Arg) + AMP + diphosphate. The protein is Arginine--tRNA ligase of Leuconostoc mesenteroides subsp. mesenteroides (strain ATCC 8293 / DSM 20343 / BCRC 11652 / CCM 1803 / JCM 6124 / NCDO 523 / NBRC 100496 / NCIMB 8023 / NCTC 12954 / NRRL B-1118 / 37Y).